The sequence spans 380 residues: Chorismate synthase (380 aa).

NADP(+) contacts are provided by R40 and R46. FMN contacts are provided by residues 128–130, 247–248, G292, 307–311, and R333; these read RSS, QA, and KPIPT.

The protein belongs to the chorismate synthase family. As to quaternary structure, homotetramer. It depends on FMNH2 as a cofactor.

It carries out the reaction 5-O-(1-carboxyvinyl)-3-phosphoshikimate = chorismate + phosphate. Its pathway is metabolic intermediate biosynthesis; chorismate biosynthesis; chorismate from D-erythrose 4-phosphate and phosphoenolpyruvate: step 7/7. Its function is as follows. Catalyzes the anti-1,4-elimination of the C-3 phosphate and the C-6 proR hydrogen from 5-enolpyruvylshikimate-3-phosphate (EPSP) to yield chorismate, which is the branch point compound that serves as the starting substrate for the three terminal pathways of aromatic amino acid biosynthesis. This reaction introduces a second double bond into the aromatic ring system. The sequence is that of Chorismate synthase from Alkaliphilus metalliredigens (strain QYMF).